The primary structure comprises 243 residues: Small ribosomal subunit protein uS3 (243 aa).

Residues 39-110 (IRTFIQKKYS…QVRINVVEVE (72 aa)) enclose the KH type-2 domain. A disordered region spans residues 221-243 (GAIPRRKGSRKPQQFEDRSNENS). A compositionally biased stretch (basic and acidic residues) spans 233–243 (QQFEDRSNENS).

Belongs to the universal ribosomal protein uS3 family. In terms of assembly, part of the 30S ribosomal subunit. Forms a tight complex with proteins S10 and S14.

Binds the lower part of the 30S subunit head. Binds mRNA in the 70S ribosome, positioning it for translation. In Prochlorococcus marinus subsp. pastoris (strain CCMP1986 / NIES-2087 / MED4), this protein is Small ribosomal subunit protein uS3.